A 435-amino-acid chain; its full sequence is Serine carboxypeptidase-like 12 (435 aa).

The N-terminal stretch at 1–21 is a signal peptide; that stretch reads MKSTPKLLLLLLFIINHHVDS. Disulfide bonds link Cys-80-Cys-323, Cys-244-Cys-258, and Cys-282-Cys-289. The N-linked (GlcNAc...) asparagine glycan is linked to Asn-101. The active site involves Ser-176. Residues Asn-313, Asn-336, and Asn-344 are each glycosylated (N-linked (GlcNAc...) asparagine). Residue Asp-360 is part of the active site. Asn-376 is a glycosylation site (N-linked (GlcNAc...) asparagine). His-413 is an active-site residue. N-linked (GlcNAc...) asparagine glycosylation occurs at Asn-420.

This sequence belongs to the peptidase S10 family. As to expression, expressed in roots.

Its subcellular location is the secreted. Functionally, probable carboxypeptidase. The protein is Serine carboxypeptidase-like 12 (SCPL12) of Arabidopsis thaliana (Mouse-ear cress).